The following is a 194-amino-acid chain: ATP synthase subunit delta (194 aa).

The protein belongs to the ATPase delta chain family. F-type ATPases have 2 components, F(1) - the catalytic core - and F(0) - the membrane proton channel. F(1) has five subunits: alpha(3), beta(3), gamma(1), delta(1), epsilon(1). F(0) has three main subunits: a(1), b(2) and c(10-14). The alpha and beta chains form an alternating ring which encloses part of the gamma chain. F(1) is attached to F(0) by a central stalk formed by the gamma and epsilon chains, while a peripheral stalk is formed by the delta and b chains.

Its subcellular location is the cell inner membrane. Functionally, f(1)F(0) ATP synthase produces ATP from ADP in the presence of a proton or sodium gradient. F-type ATPases consist of two structural domains, F(1) containing the extramembraneous catalytic core and F(0) containing the membrane proton channel, linked together by a central stalk and a peripheral stalk. During catalysis, ATP synthesis in the catalytic domain of F(1) is coupled via a rotary mechanism of the central stalk subunits to proton translocation. In terms of biological role, this protein is part of the stalk that links CF(0) to CF(1). It either transmits conformational changes from CF(0) to CF(1) or is implicated in proton conduction. The sequence is that of ATP synthase subunit delta from Bartonella quintana (strain Toulouse) (Rochalimaea quintana).